A 412-amino-acid chain; its full sequence is L-cysteine:1D-myo-inositol 2-amino-2-deoxy-alpha-D-glucopyranoside ligase (412 aa).

C43 contacts Zn(2+). L-cysteinyl-5'-AMP-binding positions include 43-46 (CGIT), T58, and 81-83 (NVT). The 'HIGH' region signature appears at 45-55 (ITPYDATHLGH). The short motif at 187 to 192 (ERGGDP) is the 'ERGGDP' region element. Residue W227 participates in L-cysteinyl-5'-AMP binding. Residue C231 coordinates Zn(2+). 249–251 (GSD) is an L-cysteinyl-5'-AMP binding site. H256 provides a ligand contact to Zn(2+). Residue I283 participates in L-cysteinyl-5'-AMP binding. A 'KMSKS' region motif is present at residues 289–293 (KMSKS).

Belongs to the class-I aminoacyl-tRNA synthetase family. MshC subfamily. As to quaternary structure, monomer. Zn(2+) serves as cofactor.

It catalyses the reaction 1D-myo-inositol 2-amino-2-deoxy-alpha-D-glucopyranoside + L-cysteine + ATP = 1D-myo-inositol 2-(L-cysteinylamino)-2-deoxy-alpha-D-glucopyranoside + AMP + diphosphate + H(+). In terms of biological role, catalyzes the ATP-dependent condensation of GlcN-Ins and L-cysteine to form L-Cys-GlcN-Ins. The chain is L-cysteine:1D-myo-inositol 2-amino-2-deoxy-alpha-D-glucopyranoside ligase from Saccharopolyspora erythraea (strain ATCC 11635 / DSM 40517 / JCM 4748 / NBRC 13426 / NCIMB 8594 / NRRL 2338).